The primary structure comprises 258 residues: Thiazole synthase 2 (258 aa).

K97 functions as the Schiff-base intermediate with DXP in the catalytic mechanism. 1-deoxy-D-xylulose 5-phosphate contacts are provided by residues G158, 184–185 (AG), and 206–207 (NT).

The protein belongs to the ThiG family. As to quaternary structure, homotetramer. Forms heterodimers with either ThiH or ThiS.

It localises to the cytoplasm. It catalyses the reaction [ThiS sulfur-carrier protein]-C-terminal-Gly-aminoethanethioate + 2-iminoacetate + 1-deoxy-D-xylulose 5-phosphate = [ThiS sulfur-carrier protein]-C-terminal Gly-Gly + 2-[(2R,5Z)-2-carboxy-4-methylthiazol-5(2H)-ylidene]ethyl phosphate + 2 H2O + H(+). It functions in the pathway cofactor biosynthesis; thiamine diphosphate biosynthesis. Its function is as follows. Catalyzes the rearrangement of 1-deoxy-D-xylulose 5-phosphate (DXP) to produce the thiazole phosphate moiety of thiamine. Sulfur is provided by the thiocarboxylate moiety of the carrier protein ThiS. In vitro, sulfur can be provided by H(2)S. The chain is Thiazole synthase 2 from Syntrophotalea carbinolica (strain DSM 2380 / NBRC 103641 / GraBd1) (Pelobacter carbinolicus).